The chain runs to 167 residues: Multifunctional Ser/Thr-tRNA deacylase ProXp-y (167 aa).

The protein localises to the cytoplasm. The enzyme catalyses L-seryl-tRNA(Lys) + H2O = tRNA(Lys) + L-serine. It carries out the reaction L-threonyl-tRNA(Lys) + H2O = tRNA(Lys) + L-threonine. The catalysed reaction is L-homoseryl-tRNA(Lys) + H2O = tRNA(Lys) + L-homoserine + H(+). It catalyses the reaction L-seryl-tRNA(Ala) + H2O = tRNA(Ala) + L-serine. The enzyme catalyses L-homoseryl-tRNA(Ser) + H2O = tRNA(Ser) + L-homoserine + H(+). It carries out the reaction L-seryl-tRNA(Thr) + H2O = tRNA(Thr) + L-serine. The catalysed reaction is L-threonyl-tRNA(Ile) + H2O = tRNA(Ile) + L-threonine. It catalyses the reaction L-threonyl-tRNA(Val) + H2O = tRNA(Val) + L-threonine. The enzyme catalyses L-threonyl-tRNA(Ser) + H2O = tRNA(Ser) + L-threonine. An aminoacyl-tRNA editing enzyme that deacylates Ser-tRNA and/or Thr-tRNA mischarged by lysyl-tRNA synthetase (LysRS), threonyl-tRNA synthetase (ThrRS), seryl-tRNA synthetase (SerRS), alanyl-tRNA synthetase (AlaRS), valyl-tRNA synthetase (ValRS) and isoleucyl-tRNA synthetase (IleRS) in vitro. Also deacylates mischarged Hse-tRNA(Lys) and Hse-tRNA(Ser), and cognate Ser-tRNA(Ser) and Thr-tRNA(Thr) in vitro. The presence of cognate ThrRS abolishes the Thr-tRNA(Thr) deacylase activity, hence this activity is not applicable physiologically. Not able to remove the amino acid moiety from cognate Val-tRNA(Val), Ile-tRNA(Ile), Lys-tRNA(Lys), Ala-tRNA(Ala) or Pro-tRNA(Pro), or from incorrectly charged Ala-tRNA(Pro), Cys-tRNA(Pro) or Leu-tRNA(Pro) in vitro. May be required in vivo to prevent mistranslation and to maintain growth when the error prone stress-inducible lysyl-tRNA synthetase (LysU) is expressed under environmental pressure. The protein is Multifunctional Ser/Thr-tRNA deacylase ProXp-y of Escherichia coli O157:H7.